Here is a 335-residue protein sequence, read N- to C-terminus: Biotin synthase (335 aa).

One can recognise a Radical SAM core domain in the interval 46–274 (YKVQLASLFS…KSKIRLSAGR (229 aa)). [4Fe-4S] cluster is bound by residues Cys61, Cys65, and Cys68. [2Fe-2S] cluster-binding residues include Cys105, Cys137, Cys197, and Arg269.

This sequence belongs to the radical SAM superfamily. Biotin synthase family. In terms of assembly, homodimer. It depends on [4Fe-4S] cluster as a cofactor. [2Fe-2S] cluster serves as cofactor.

The catalysed reaction is (4R,5S)-dethiobiotin + (sulfur carrier)-SH + 2 reduced [2Fe-2S]-[ferredoxin] + 2 S-adenosyl-L-methionine = (sulfur carrier)-H + biotin + 2 5'-deoxyadenosine + 2 L-methionine + 2 oxidized [2Fe-2S]-[ferredoxin]. The protein operates within cofactor biosynthesis; biotin biosynthesis; biotin from 7,8-diaminononanoate: step 2/2. In terms of biological role, catalyzes the conversion of dethiobiotin (DTB) to biotin by the insertion of a sulfur atom into dethiobiotin via a radical-based mechanism. This is Biotin synthase from Prochlorococcus marinus (strain MIT 9515).